Consider the following 29-residue polypeptide: Cytochrome b6-f complex subunit 8 (29 aa).

Residues 3–23 (MVSLAWAALMVVFTFSLSLVV) traverse the membrane as a helical segment.

The protein belongs to the PetN family. As to quaternary structure, the 4 large subunits of the cytochrome b6-f complex are cytochrome b6, subunit IV (17 kDa polypeptide, PetD), cytochrome f and the Rieske protein, while the 4 small subunits are PetG, PetL, PetM and PetN. The complex functions as a dimer.

The protein resides in the plastid. It localises to the chloroplast thylakoid membrane. In terms of biological role, component of the cytochrome b6-f complex, which mediates electron transfer between photosystem II (PSII) and photosystem I (PSI), cyclic electron flow around PSI, and state transitions. The protein is Cytochrome b6-f complex subunit 8 of Cucumis sativus (Cucumber).